The sequence spans 2434 residues: Protein Ycf2 (2434 aa).

1693–1700 (GPTETGRS) is an ATP binding site.

Belongs to the Ycf2 family.

It is found in the plastid. It localises to the chloroplast stroma. Functionally, probable ATPase of unknown function. Its presence in a non-photosynthetic plant (Epifagus virginiana) and experiments in tobacco indicate that it has an essential function which is probably not related to photosynthesis. The chain is Protein Ycf2 from Cycas taitungensis (Prince sago).